The sequence spans 379 residues: MSEFLPFSRPAMGVEELAAVKEVLESGWITTGPKNQALEQAFCQLTGNQHAIAVSSATAGMHITLMALKIGKGDEVITPSLTWVSTLNMISLLGATPVMVDVDRDTLMVTPEAIESAITPRTKAIIPVHYAGAPADIDAIRAIGERYGIAVIEDAAHAVGTYYKGRHIGAKGTAIFSFHAIKNITCAEGGLIVTDNENLARQLRMLKFHGLGVDAYDRQTWGRAPQAEVLTPGYKYNLTDINAAIALTQLVKLEHLNTRRREIAQQYQQALAALPFQPLSLPAWPHVHAWHLFIIRVDEQRCGISRDALMEALKERGIGTGLHFRAAHTQKYYRERFPTLSLPNTEWNSERICSLPLFPDMTTADADHVITALQQLAGQ.

Lysine 182 is subject to N6-(pyridoxal phosphate)lysine.

This sequence belongs to the DegT/DnrJ/EryC1 family. ArnB subfamily. As to quaternary structure, homodimer. The cofactor is pyridoxal 5'-phosphate.

It catalyses the reaction UDP-4-amino-4-deoxy-beta-L-arabinose + 2-oxoglutarate = UDP-beta-L-threo-pentopyranos-4-ulose + L-glutamate. Its pathway is nucleotide-sugar biosynthesis; UDP-4-deoxy-4-formamido-beta-L-arabinose biosynthesis; UDP-4-deoxy-4-formamido-beta-L-arabinose from UDP-alpha-D-glucuronate: step 2/3. It participates in bacterial outer membrane biogenesis; lipopolysaccharide biosynthesis. Catalyzes the conversion of UDP-4-keto-arabinose (UDP-Ara4O) to UDP-4-amino-4-deoxy-L-arabinose (UDP-L-Ara4N). The modified arabinose is attached to lipid A and is required for resistance to polymyxin and cationic antimicrobial peptides. The chain is UDP-4-amino-4-deoxy-L-arabinose--oxoglutarate aminotransferase from Escherichia coli (strain K12 / DH10B).